The sequence spans 634 residues: Sodium-dependent multivitamin transporter (634 aa).

Helical transmembrane passes span 23–43, 65–85, 100–120, 142–162, 175–195, 207–227, 255–275, 295–315, 350–370, 403–423, 427–447, and 455–475; these read FSVVDYVVFGLLLVLSLVIGL, MGCLPVALSLLATFQSAVAIL, FLGCSYFLGLLIPAHIFIPVF, ICGTVTFIFQMVIYMGVALYA, LWLSVLALGIVCNIYTALGGL, LVMFLGQLVVIIVGAARVGGL, FWTLAFGGVFMMLSLYGVNQA, AVFPCQQVALCMSCLIGLVMF, LPGLFVACLFSGSLSTISSAF, FAYGLVCLGMAYISSHLGSVL, LSIFGMVGGPLLGLFCLGLFF, and AIVGLLTGLTMAFWIGIGSIV. 2 N-linked (GlcNAc...) asparagine glycosylation sites follow: asparagine 488 and asparagine 497. A helical transmembrane segment spans residues 526 to 546; sequence LWYSAHNSTTVIVVGLIVSLL.

It belongs to the sodium:solute symporter (SSF) (TC 2.A.21) family. As to quaternary structure, interacts with PDZD11. In terms of tissue distribution, expressed in the intestinal mucosa, liver and kidney (at protein level). Expressed in the colon.

It is found in the cell membrane. It localises to the apical cell membrane. The enzyme catalyses biotin(out) + 2 Na(+)(out) = biotin(in) + 2 Na(+)(in). It carries out the reaction (R)-pantothenate(out) + 2 Na(+)(out) = (R)-pantothenate(in) + 2 Na(+)(in). It catalyses the reaction (R)-lipoate(out) + 2 Na(+)(out) = (R)-lipoate(in) + 2 Na(+)(in). The catalysed reaction is iodide(out) + 2 Na(+)(out) = iodide(in) + 2 Na(+)(in). Functionally, sodium-dependent multivitamin transporter that mediates the electrogenic transport of pantothenate, biotin, lipoate and iodide. Functions as a Na(+)-coupled substrate symporter where the stoichiometry of Na(+):substrate is 2:1, creating an electrochemical Na(+) gradient used as driving force for substrate uptake. Required for biotin and pantothenate uptake in the intestine across the brush border membrane. Plays a role in the maintenance of intestinal mucosa integrity, by providing the gut mucosa with biotin. Contributes to the luminal uptake of biotin and pantothenate into the brain across the blood-brain barrier. This chain is Sodium-dependent multivitamin transporter, found in Mus musculus (Mouse).